Consider the following 268-residue polypeptide: Type II methyltransferase M2.DpnII (268 aa).

This sequence belongs to the N(4)/N(6)-methyltransferase family. Homodimer.

The catalysed reaction is a 2'-deoxyadenosine in DNA + S-adenosyl-L-methionine = an N(6)-methyl-2'-deoxyadenosine in DNA + S-adenosyl-L-homocysteine + H(+). A beta subtype methylase that recognizes the single- or double-stranded sequence 5'-GATC-3', methylates A-2 on one or both strands (respectively), and protects the DNA from cleavage by the DpnII endonuclease. Further methylates DNA that is already methylated at 5'-GATC-3' sites. Essential for establishment of a previously unmethylated plasmid transformed into the cell as single-stranded DNA, enhances plasmid transfer to DpnII-containing strains of Streptococcus pneumoniae. The sequence is that of Type II methyltransferase M2.DpnII from Streptococcus pneumoniae.